The following is an 89-amino-acid chain: Small ribosomal subunit protein uS15 (89 aa).

Belongs to the universal ribosomal protein uS15 family. In terms of assembly, part of the 30S ribosomal subunit. Forms a bridge to the 50S subunit in the 70S ribosome, contacting the 23S rRNA.

Its function is as follows. One of the primary rRNA binding proteins, it binds directly to 16S rRNA where it helps nucleate assembly of the platform of the 30S subunit by binding and bridging several RNA helices of the 16S rRNA. In terms of biological role, forms an intersubunit bridge (bridge B4) with the 23S rRNA of the 50S subunit in the ribosome. The sequence is that of Small ribosomal subunit protein uS15 from Corynebacterium efficiens (strain DSM 44549 / YS-314 / AJ 12310 / JCM 11189 / NBRC 100395).